The sequence spans 826 residues: U-box domain-containing protein 4 (826 aa).

Residues 172 to 204 (RSNQEILIEAVALERQKEMAEQSENNAEVEFLD) are a coiled coil. Residues 229–303 (AILADFFCPL…ANWCETNDVK (75 aa)) form the U-box domain. The segment at 330 to 501 (GADVSARKVS…TRRDLSDFSP (172 aa)) is disordered. The span at 347-360 (ASSSETGKPSFSSR) shows a compositional bias: polar residues. Residues 391–414 (DARRGSLNDFEDRSNDSRELRTDA) show a composition bias toward basic and acidic residues. Residue Ser-396 is modified to Phosphoserine. A compositionally biased stretch (low complexity) spans 416-428 (GRSSVSSTTRGSV). Residues 492-501 (TRRDLSDFSP) are compositionally biased toward basic and acidic residues. 7 ARM repeats span residues 530 to 570 (NETR…LLAK), 573 to 612 (MDNR…NLSI), 614 to 653 (DNNK…SLSV), 655 to 694 (EENK…NLSI), 696 to 734 (QENK…NLAT), 736 to 775 (PEGR…QLST), and 778 to 817 (GRFC…YFRN).

The catalysed reaction is S-ubiquitinyl-[E2 ubiquitin-conjugating enzyme]-L-cysteine + [acceptor protein]-L-lysine = [E2 ubiquitin-conjugating enzyme]-L-cysteine + N(6)-ubiquitinyl-[acceptor protein]-L-lysine.. It functions in the pathway protein modification; protein ubiquitination. In terms of biological role, functions as an E3 ubiquitin ligase. The protein is U-box domain-containing protein 4 (PUB4) of Arabidopsis thaliana (Mouse-ear cress).